The chain runs to 290 residues: Shikimate dehydrogenase (NADP(+)) (290 aa).

Residues 20–22 and Thr-67 each bind shikimate; that span reads SLS. Catalysis depends on Lys-71, which acts as the Proton acceptor. The shikimate site is built by Asn-92 and Asp-107. Residues 132 to 136 and Met-228 contribute to the NADP(+) site; that span reads GAGGA. Residue Tyr-230 coordinates shikimate. Gly-251 lines the NADP(+) pocket.

It belongs to the shikimate dehydrogenase family. As to quaternary structure, homodimer.

It carries out the reaction shikimate + NADP(+) = 3-dehydroshikimate + NADPH + H(+). The protein operates within metabolic intermediate biosynthesis; chorismate biosynthesis; chorismate from D-erythrose 4-phosphate and phosphoenolpyruvate: step 4/7. Functionally, involved in the biosynthesis of the chorismate, which leads to the biosynthesis of aromatic amino acids. Catalyzes the reversible NADPH linked reduction of 3-dehydroshikimate (DHSA) to yield shikimate (SA). The chain is Shikimate dehydrogenase (NADP(+)) from Citrifermentans bemidjiense (strain ATCC BAA-1014 / DSM 16622 / JCM 12645 / Bem) (Geobacter bemidjiensis).